The primary structure comprises 339 residues: Phenylalanine--tRNA ligase alpha subunit (339 aa).

Glu254 serves as a coordination point for Mg(2+).

It belongs to the class-II aminoacyl-tRNA synthetase family. Phe-tRNA synthetase alpha subunit type 1 subfamily. As to quaternary structure, tetramer of two alpha and two beta subunits. Mg(2+) is required as a cofactor.

Its subcellular location is the cytoplasm. The enzyme catalyses tRNA(Phe) + L-phenylalanine + ATP = L-phenylalanyl-tRNA(Phe) + AMP + diphosphate + H(+). The chain is Phenylalanine--tRNA ligase alpha subunit from Clostridium tetani (strain Massachusetts / E88).